We begin with the raw amino-acid sequence, 1357 residues long: DNA-directed RNA polymerase subunit beta (1357 aa).

Belongs to the RNA polymerase beta chain family. As to quaternary structure, the RNAP catalytic core consists of 2 alpha, 1 beta, 1 beta' and 1 omega subunit. When a sigma factor is associated with the core the holoenzyme is formed, which can initiate transcription.

The enzyme catalyses RNA(n) + a ribonucleoside 5'-triphosphate = RNA(n+1) + diphosphate. Functionally, DNA-dependent RNA polymerase catalyzes the transcription of DNA into RNA using the four ribonucleoside triphosphates as substrates. This is DNA-directed RNA polymerase subunit beta from Pseudomonas putida (strain W619).